Here is a 280-residue protein sequence, read N- to C-terminus: Energy-coupling factor transporter ATP-binding protein EcfA1 (280 aa).

Positions 6–244 (IECKNVVYKY…VPLMKNIGLD (239 aa)) constitute an ABC transporter domain. 43–50 (GHNGSGKS) provides a ligand contact to ATP.

Belongs to the ABC transporter superfamily. Energy-coupling factor EcfA family. Forms a stable energy-coupling factor (ECF) transporter complex composed of 2 membrane-embedded substrate-binding proteins (S component), 2 ATP-binding proteins (A component) and 2 transmembrane proteins (T component).

It localises to the cell membrane. Its function is as follows. ATP-binding (A) component of a common energy-coupling factor (ECF) ABC-transporter complex. Unlike classic ABC transporters this ECF transporter provides the energy necessary to transport a number of different substrates. The protein is Energy-coupling factor transporter ATP-binding protein EcfA1 of Clostridium novyi (strain NT).